Here is a 601-residue protein sequence, read N- to C-terminus: Glutathione-regulated potassium-efflux system protein KefB (601 aa).

13 helical membrane passes run 4-24 (SDLL…VPLA), 29-49 (IGAV…GLGF), 55-75 (EILH…GLEL), 87-107 (IFGV…GLLM), 115-135 (AAVI…LQLM), 152-172 (VLLF…LLAG), 177-197 (HFDW…LIGG), 207-227 (FIAD…LVLG), 230-250 (LFMD…GVLL), 262-282 (AIDP…GMSL), 284-304 (LGVL…LVAV), 324-344 (MQFA…FSTA), and 356-376 (SLLL…MKLV). One can recognise an RCK N-terminal domain in the interval 400 to 519 (KPQVIVVGFG…AGVTQFSRET (120 aa)).

Belongs to the monovalent cation:proton antiporter 2 (CPA2) transporter (TC 2.A.37) family. KefB subfamily. As to quaternary structure, interacts with the regulatory subunit KefG.

Its subcellular location is the cell inner membrane. Pore-forming subunit of a potassium efflux system that confers protection against electrophiles. Catalyzes K(+)/H(+) antiport. The protein is Glutathione-regulated potassium-efflux system protein KefB of Citrobacter koseri (strain ATCC BAA-895 / CDC 4225-83 / SGSC4696).